A 345-amino-acid polypeptide reads, in one-letter code: S-adenosylmethionine:tRNA ribosyltransferase-isomerase (345 aa).

It belongs to the QueA family. Monomer.

The protein resides in the cytoplasm. It catalyses the reaction 7-aminomethyl-7-carbaguanosine(34) in tRNA + S-adenosyl-L-methionine = epoxyqueuosine(34) in tRNA + adenine + L-methionine + 2 H(+). Its pathway is tRNA modification; tRNA-queuosine biosynthesis. In terms of biological role, transfers and isomerizes the ribose moiety from AdoMet to the 7-aminomethyl group of 7-deazaguanine (preQ1-tRNA) to give epoxyqueuosine (oQ-tRNA). The protein is S-adenosylmethionine:tRNA ribosyltransferase-isomerase of Shewanella halifaxensis (strain HAW-EB4).